A 1842-amino-acid chain; its full sequence is Fatty acid synthase subunit alpha (1842 aa).

Residues 101–141 (PAEAPASTSSTPKVETAAAAAPAATPAPAPAQTSAPAAALP) form a disordered region. Residues 116–139 (TAAAAAPAATPAPAPAQTSAPAAA) show a composition bias toward low complexity. In terms of domain architecture, Carrier spans 145-220 (PKALEVLHTL…AIMQSSFNGS (76 aa)). S180 bears the O-(pantetheine 4'-phosphoryl)serine mark. Phosphoserine is present on S604. A Ketosynthase family 3 (KS3) domain is found at 1079–1616 (LQEVVIDHDL…QVGGQVIVIH (538 aa)). C1262 (for beta-ketoacyl synthase activity) is an active-site residue. The tract at residues 1304–1332 (GATSNAAKETERGRTPQEMSRPATSTRDG) is disordered. S1412 bears the Phosphoserine mark. Active-site for beta-ketoacyl synthase activity residues include H1501 and H1542. D1728, V1729, and E1730 together coordinate Mg(2+). Residues 1728 to 1730 (DVE), Y1754, S1764, 1773 to 1783 (EAVFKSLGISG), 1797 to 1800 (SSES), and 1827 to 1829 (ISH) contribute to the acetyl-CoA site. Residues S1828 and H1829 each coordinate Mg(2+).

This sequence belongs to the thiolase-like superfamily. Fungal fatty acid synthetase subunit alpha family. In terms of assembly, [Alpha(6)beta(6)] hexamers of two multifunctional subunits (alpha and beta).

It catalyses the reaction acetyl-CoA + n malonyl-CoA + 2n NADPH + 4n H(+) = a long-chain-acyl-CoA + n CoA + n CO2 + 2n NADP(+).. The enzyme catalyses a fatty acyl-[ACP] + malonyl-[ACP] + H(+) = a 3-oxoacyl-[ACP] + holo-[ACP] + CO2. It carries out the reaction a (3R)-hydroxyacyl-[ACP] + NADP(+) = a 3-oxoacyl-[ACP] + NADPH + H(+). Functionally, fatty acid synthetase catalyzes the formation of long-chain fatty acids from acetyl-CoA, malonyl-CoA and NADPH. The alpha subunit contains domains for: acyl carrier protein, 3-oxoacyl-[acyl-carrier-protein] reductase, and 3-oxoacyl-[acyl-carrier-protein] synthase. This subunit coordinates the binding of the six beta subunits to the enzyme complex. In Schizosaccharomyces pombe (strain 972 / ATCC 24843) (Fission yeast), this protein is Fatty acid synthase subunit alpha (fas2).